Here is a 301-residue protein sequence, read N- to C-terminus: Cardiolipin synthase (CMP-forming) (301 aa).

Residues 70–93 (SGAGKAAPRPAAGAGAAAEAPGGQ) are disordered. The span at 71–93 (GAGKAAPRPAAGAGAAAEAPGGQ) shows a compositional bias: low complexity. 5 helical membrane passes run 109-129 (IPNM…YLII), 133-153 (FNIA…DGFI), 190-212 (IPVP…VFYV), 250-270 (LILV…SIYL), and 272-292 (ILWC…YHYG).

It belongs to the CDP-alcohol phosphatidyltransferase class-I family. A divalent metal cation is required as a cofactor. Highly expressed in tissues such as heart, skeletal muscle and liver.

The protein localises to the mitochondrion inner membrane. The enzyme catalyses a CDP-1,2-diacyl-sn-glycerol + a 1,2-diacyl-sn-glycero-3-phospho-(1'-sn-glycerol) = a cardiolipin + CMP + H(+). Catalyzes the synthesis of cardiolipin (CL) (diphosphatidylglycerol) by specifically transferring a phosphatidyl group from CDP-diacylglycerol to phosphatidylglycerol (PG). CL is a key phospholipid in mitochondrial membranes and plays important roles in maintaining the functional integrity and dynamics of mitochondria under both optimal and stress conditions. In Homo sapiens (Human), this protein is Cardiolipin synthase (CMP-forming) (CRLS1).